The chain runs to 618 residues: Proline--tRNA ligase (618 aa).

It belongs to the class-II aminoacyl-tRNA synthetase family. ProS type 1 subfamily. As to quaternary structure, homodimer.

The protein localises to the cytoplasm. It carries out the reaction tRNA(Pro) + L-proline + ATP = L-prolyl-tRNA(Pro) + AMP + diphosphate. Catalyzes the attachment of proline to tRNA(Pro) in a two-step reaction: proline is first activated by ATP to form Pro-AMP and then transferred to the acceptor end of tRNA(Pro). As ProRS can inadvertently accommodate and process non-cognate amino acids such as alanine and cysteine, to avoid such errors it has two additional distinct editing activities against alanine. One activity is designated as 'pretransfer' editing and involves the tRNA(Pro)-independent hydrolysis of activated Ala-AMP. The other activity is designated 'posttransfer' editing and involves deacylation of mischarged Ala-tRNA(Pro). The misacylated Cys-tRNA(Pro) is not edited by ProRS. In Streptococcus pyogenes serotype M28 (strain MGAS6180), this protein is Proline--tRNA ligase.